Reading from the N-terminus, the 196-residue chain is Carnitine operon protein CaiE (196 aa).

Positions L176–R196 are disordered.

Belongs to the transferase hexapeptide repeat family.

It participates in amine and polyamine metabolism; carnitine metabolism. Overproduction of CaiE stimulates the activity of CaiB and CaiD. This is Carnitine operon protein CaiE from Escherichia fergusonii (strain ATCC 35469 / DSM 13698 / CCUG 18766 / IAM 14443 / JCM 21226 / LMG 7866 / NBRC 102419 / NCTC 12128 / CDC 0568-73).